Here is a 141-residue protein sequence, read N- to C-terminus: 3-hydroxyacyl-[acyl-carrier-protein] dehydratase FabZ (141 aa).

His-48 is an active-site residue.

This sequence belongs to the thioester dehydratase family. FabZ subfamily.

Its subcellular location is the cytoplasm. The catalysed reaction is a (3R)-hydroxyacyl-[ACP] = a (2E)-enoyl-[ACP] + H2O. In terms of biological role, involved in unsaturated fatty acids biosynthesis. Catalyzes the dehydration of short chain beta-hydroxyacyl-ACPs and long chain saturated and unsaturated beta-hydroxyacyl-ACPs. This is 3-hydroxyacyl-[acyl-carrier-protein] dehydratase FabZ from Bacillus subtilis (strain 168).